The sequence spans 152 residues: Xanthine-guanine phosphoribosyltransferase (152 aa).

5-phospho-alpha-D-ribose 1-diphosphate-binding positions include 37 to 38, Arg-69, and 88 to 96; these read RG and DDLVDTGGT. Arg-69 contributes to the GMP binding site. Residue Asp-89 coordinates Mg(2+). Positions 92 and 135 each coordinate guanine. Xanthine is bound by residues Asp-92 and Ile-135. GMP is bound by residues 92 to 96 and 134 to 135; these read DTGGT and WI.

The protein belongs to the purine/pyrimidine phosphoribosyltransferase family. XGPT subfamily. In terms of assembly, homotetramer. Mg(2+) is required as a cofactor.

Its subcellular location is the cell inner membrane. It carries out the reaction GMP + diphosphate = guanine + 5-phospho-alpha-D-ribose 1-diphosphate. It catalyses the reaction XMP + diphosphate = xanthine + 5-phospho-alpha-D-ribose 1-diphosphate. The enzyme catalyses IMP + diphosphate = hypoxanthine + 5-phospho-alpha-D-ribose 1-diphosphate. The protein operates within purine metabolism; GMP biosynthesis via salvage pathway; GMP from guanine: step 1/1. It functions in the pathway purine metabolism; XMP biosynthesis via salvage pathway; XMP from xanthine: step 1/1. Purine salvage pathway enzyme that catalyzes the transfer of the ribosyl-5-phosphate group from 5-phospho-alpha-D-ribose 1-diphosphate (PRPP) to the N9 position of the 6-oxopurines guanine and xanthine to form the corresponding ribonucleotides GMP (guanosine 5'-monophosphate) and XMP (xanthosine 5'-monophosphate), with the release of PPi. To a lesser extent, also acts on hypoxanthine. The protein is Xanthine-guanine phosphoribosyltransferase of Salmonella choleraesuis (strain SC-B67).